A 434-amino-acid chain; its full sequence is MTHNTDLNLPLFERAKALIPGGVNSPVRAFRAVGGTPRFITRAQGAYMWDANGQRFIDYIGSWGPMILGHGHPAVLEAVQKAALEGFSFGAPTEREVELAEEIIRHVPSMEMIRLVSSGTEAGMSAIRLARGATRRNKIIKFNGCYHGHADSLLVKAGSGLATFGHATSAGVPQEVVQHTLVLEYNDVAQLEEAFTLHGPDVACVIMEPIAGNMNFVRASVPFMRRARELCTQHGALLVIDEVMTGFRVALGGAQSLYAQAIPGFKPDITVLGKVIGGGMPLAAFGGSRAVMEQLAPLGPVYQAGTLSGNPVATACGLATLREIAKPGFYDALGARTRALIDGLAGAASAAGVPLCGDTQGGMFGFFLLPQLPQNYPEVLNTDGMRFNTLFHGLLDGGVYIAPALYEAGFVSAAHTEQDIADTVAVARDVFQKL.

N6-(pyridoxal phosphate)lysine is present on K274.

It belongs to the class-III pyridoxal-phosphate-dependent aminotransferase family. HemL subfamily. As to quaternary structure, homodimer. It depends on pyridoxal 5'-phosphate as a cofactor.

Its subcellular location is the cytoplasm. The catalysed reaction is (S)-4-amino-5-oxopentanoate = 5-aminolevulinate. The protein operates within porphyrin-containing compound metabolism; protoporphyrin-IX biosynthesis; 5-aminolevulinate from L-glutamyl-tRNA(Glu): step 2/2. This Acidovorax sp. (strain JS42) protein is Glutamate-1-semialdehyde 2,1-aminomutase.